A 292-amino-acid chain; its full sequence is Small ribosomal subunit protein uS2 (292 aa).

The segment at 230–292 (RSGGAPGSEK…KKEAGSGEEA (63 aa)) is disordered. 2 stretches are compositionally biased toward basic and acidic residues: residues 247–259 (EWER…KTEA) and 271–292 (PAKE…GEEA).

The protein belongs to the universal ribosomal protein uS2 family.

The sequence is that of Small ribosomal subunit protein uS2 from Thermobifida fusca (strain YX).